Here is a 338-residue protein sequence, read N- to C-terminus: Nicotinate-nucleotide--dimethylbenzimidazole phosphoribosyltransferase (338 aa).

Catalysis depends on Glu-306, which acts as the Proton acceptor.

This sequence belongs to the CobT family.

It carries out the reaction 5,6-dimethylbenzimidazole + nicotinate beta-D-ribonucleotide = alpha-ribazole 5'-phosphate + nicotinate + H(+). It participates in nucleoside biosynthesis; alpha-ribazole biosynthesis; alpha-ribazole from 5,6-dimethylbenzimidazole: step 1/2. In terms of biological role, catalyzes the synthesis of alpha-ribazole-5'-phosphate from nicotinate mononucleotide (NAMN) and 5,6-dimethylbenzimidazole (DMB). The sequence is that of Nicotinate-nucleotide--dimethylbenzimidazole phosphoribosyltransferase from Cereibacter sphaeroides (strain ATCC 17025 / ATH 2.4.3) (Rhodobacter sphaeroides).